Consider the following 651-residue polypeptide: DNA ligase (651 aa).

NAD(+)-binding positions include 30–34 (DEEYD), 79–80 (SM), and glutamate 105. Lysine 107 acts as the N6-AMP-lysine intermediate in catalysis. 3 residues coordinate NAD(+): arginine 128, glutamate 162, and lysine 301. Residues cysteine 395, cysteine 398, cysteine 411, and cysteine 416 each contribute to the Zn(2+) site. Positions 570–651 (ALNENISNKT…NALLGGDDEV (82 aa)) constitute a BRCT domain.

The protein belongs to the NAD-dependent DNA ligase family. LigA subfamily. The cofactor is Mg(2+). It depends on Mn(2+) as a cofactor.

It catalyses the reaction NAD(+) + (deoxyribonucleotide)n-3'-hydroxyl + 5'-phospho-(deoxyribonucleotide)m = (deoxyribonucleotide)n+m + AMP + beta-nicotinamide D-nucleotide.. In terms of biological role, DNA ligase that catalyzes the formation of phosphodiester linkages between 5'-phosphoryl and 3'-hydroxyl groups in double-stranded DNA using NAD as a coenzyme and as the energy source for the reaction. It is essential for DNA replication and repair of damaged DNA. The chain is DNA ligase from Campylobacter lari (strain RM2100 / D67 / ATCC BAA-1060).